The sequence spans 439 residues: Exodeoxyribonuclease 7 large subunit (439 aa).

It belongs to the XseA family. In terms of assembly, heterooligomer composed of large and small subunits.

It is found in the cytoplasm. It catalyses the reaction Exonucleolytic cleavage in either 5'- to 3'- or 3'- to 5'-direction to yield nucleoside 5'-phosphates.. In terms of biological role, bidirectionally degrades single-stranded DNA into large acid-insoluble oligonucleotides, which are then degraded further into small acid-soluble oligonucleotides. This is Exodeoxyribonuclease 7 large subunit from Haemophilus influenzae (strain ATCC 51907 / DSM 11121 / KW20 / Rd).